Here is a 269-residue protein sequence, read N- to C-terminus: Phosphatidylglycerophosphate phosphatase 1, chloroplastic (269 aa).

Residues 1–33 (MRSVPGPSPPCTRSLAHSCRAAARGPCGSARPR) constitute a chloroplast transit peptide. Residues 25–46 (GPCGSARPRARSVSARAHSSEA) are disordered. Positions 29–46 (SARPRARSVSARAHSSEA) are enriched in low complexity. A Phosphoryl acceptor motif is present at residues 103–107 (DKDNT).

This sequence belongs to the HAD-like hydrolase superfamily.

The protein resides in the plastid. The protein localises to the chloroplast. It carries out the reaction a 1,2-diacyl-sn-glycero-3-phospho-(1'-sn-glycero-3'-phosphate) + H2O = a 1,2-diacyl-sn-glycero-3-phospho-(1'-sn-glycerol) + phosphate. The protein operates within phospholipid metabolism; phosphatidylglycerol biosynthesis; phosphatidylglycerol from CDP-diacylglycerol: step 2/2. Functionally, phosphatidylglycerophosphate phosphatase involved in the biosynthesis of phosphatidylglycerol (PG), a phosphoglycerolipid predominantly present in chloroplastic thylakoid membranes and which has important photosynthetic function. Required for thylakoid membranes development and chloroplast function. The polypeptide is Phosphatidylglycerophosphate phosphatase 1, chloroplastic (Chlamydomonas reinhardtii (Chlamydomonas smithii)).